The sequence spans 614 residues: Phosphomethylpyrimidine synthase (614 aa).

Substrate-binding positions include N230, M259, Y288, H324, 344-346, 385-388, and E424; these read SRG and DGLR. Zn(2+) is bound at residue H428. Y451 contributes to the substrate binding site. H492 contributes to the Zn(2+) binding site. [4Fe-4S] cluster contacts are provided by C572, C575, and C580.

The protein belongs to the ThiC family. As to quaternary structure, homodimer. Requires [4Fe-4S] cluster as cofactor.

The catalysed reaction is 5-amino-1-(5-phospho-beta-D-ribosyl)imidazole + S-adenosyl-L-methionine = 4-amino-2-methyl-5-(phosphooxymethyl)pyrimidine + CO + 5'-deoxyadenosine + formate + L-methionine + 3 H(+). It functions in the pathway cofactor biosynthesis; thiamine diphosphate biosynthesis. In terms of biological role, catalyzes the synthesis of the hydroxymethylpyrimidine phosphate (HMP-P) moiety of thiamine from aminoimidazole ribotide (AIR) in a radical S-adenosyl-L-methionine (SAM)-dependent reaction. This chain is Phosphomethylpyrimidine synthase, found in Stenotrophomonas maltophilia (strain K279a).